The sequence spans 96 residues: MHVTLVEINVHEDKVDEFIEVFRQNHLGSVQEEGNLRFDVLQDPEVNSRFYIYEAYKDEDTVAFHKTTPHYKTCVAKLESLMTGPRKKRLFNGLMP.

The region spanning 2 to 91 (HVTLVEINVH…MTGPRKKRLF (90 aa)) is the ABM domain.

This sequence belongs to the LsrG family. In terms of assembly, homodimer.

The protein localises to the cytoplasm. The enzyme catalyses (2S)-2-hydroxy-3,4-dioxopentyl phosphate = 3-hydroxy-2,4-dioxopentyl phosphate. Functionally, involved in the degradation of phospho-AI-2, thereby terminating induction of the lsr operon and closing the AI-2 signaling cycle. Catalyzes the conversion of (4S)-4-hydroxy-5-phosphonooxypentane-2,3-dione (P-DPD) to 3-hydroxy-5-phosphonooxypentane-2,4-dione (P-HPD). The sequence is that of (4S)-4-hydroxy-5-phosphonooxypentane-2,3-dione isomerase from Shigella flexneri serotype 5b (strain 8401).